A 425-amino-acid chain; its full sequence is Enolase (425 aa).

A (2R)-2-phosphoglycerate-binding site is contributed by Gln-162. The Proton donor role is filled by Glu-204. Positions 241, 282, and 309 each coordinate Mg(2+). (2R)-2-phosphoglycerate contacts are provided by Lys-334, Arg-363, Ser-364, and Lys-385. Catalysis depends on Lys-334, which acts as the Proton acceptor.

Belongs to the enolase family. Mg(2+) is required as a cofactor.

Its subcellular location is the cytoplasm. The protein resides in the secreted. The protein localises to the cell surface. The catalysed reaction is (2R)-2-phosphoglycerate = phosphoenolpyruvate + H2O. Its pathway is carbohydrate degradation; glycolysis; pyruvate from D-glyceraldehyde 3-phosphate: step 4/5. In terms of biological role, catalyzes the reversible conversion of 2-phosphoglycerate (2-PG) into phosphoenolpyruvate (PEP). It is essential for the degradation of carbohydrates via glycolysis. The protein is Enolase of Corynebacterium glutamicum (strain R).